The chain runs to 67 residues: Ferredoxin (67 aa).

2 consecutive 4Fe-4S ferredoxin-type domains span residues 3-31 (WKVSVDQDTCIGDAICASLCPDVFEMNDE) and 36-67 (PKVEIIEDEELYNCAKEAMESCPVSAITIEEA). The [4Fe-4S] cluster site is built by Cys-12, Asp-15, and Cys-18. A disulfide bond links Cys-22 and Cys-49. Cys-57 serves as a coordination point for [4Fe-4S] cluster.

It depends on [4Fe-4S] cluster as a cofactor. [3Fe-4S] cluster serves as cofactor.

Functionally, ferredoxins are iron-sulfur proteins that transfer electrons in a wide variety of metabolic reactions. This chain is Ferredoxin (fdxA), found in Pyrococcus abyssi (strain GE5 / Orsay).